The sequence spans 212 residues: Uracil-DNA glycosylase (212 aa).

Residue Asp-59 is the Proton acceptor of the active site.

The protein belongs to the uracil-DNA glycosylase (UDG) superfamily. UNG family.

It localises to the cytoplasm. The catalysed reaction is Hydrolyzes single-stranded DNA or mismatched double-stranded DNA and polynucleotides, releasing free uracil.. In terms of biological role, excises uracil residues from the DNA which can arise as a result of misincorporation of dUMP residues by DNA polymerase or due to deamination of cytosine. In Ureaplasma urealyticum serovar 10 (strain ATCC 33699 / Western), this protein is Uracil-DNA glycosylase.